Here is a 496-residue protein sequence, read N- to C-terminus: MYPHFCAFVMTSTRNCLTWAASQLAPTGEGDELSGQEDAFRSWAVQTFRAACETFDVRSKHCIQIPKRYTSNATWEPEQYKLTQSPEPLDLNKALSSIHAKNLFTMRLRSLQNLHSEKSSRTTLLVQLTFEGSRGPSYLPGEHLGIFPGNQTGLVQGILERVVDCSSPDQTVCLEVHDESGSYWVKDKRLPPCSLRQALTYFLDITTPPTQLQLHKLARFATEETHRQRLEALCQPSEYNDWKFSNNPTFLEVLEEFPSLRVPAAFLLSQLPILKPRYYSISSSQDHTPSEVHLTVAVVTYRTRDGQGPLHHGVCSTWINNLKPEDPVPCFVRSVSGFQLPEDPSQPCILIGPGTGIAPFRSFWQQRLHDSQHRGLKGGRMTLVFGCRHPEEDHLYQEEMQEMVRKGVLFQVHTGYSRLPGKPKVYVQDILQKELADEVFSVLHGEQGHLYVCGDVRMARDVATTLKKLVAAKLNLSEEQVEDYFFQLKYHEDIFG.

FMN contacts are provided by cysteine 6, glutamate 32, and glutamine 36. An FAD-binding FR-type domain is found at 101–341; that stretch reads KNLFTMRLRS…VRSVSGFQLP (241 aa). NADP(+) is bound at residue arginine 121. The FAD site is built by histidine 143, arginine 277, tyrosine 279, serine 280, threonine 295, and alanine 297. Threonine 300 serves as a coordination point for NADP(+). 4 residues coordinate FAD: tyrosine 301, valine 314, cysteine 315, and serine 316. The NADP(+) site is built by threonine 355, arginine 388, serine 417, arginine 418, lysine 424, tyrosine 426, glutamine 428, and aspartate 461.

Belongs to the NOS family. In terms of assembly, homodimer. Interacts with NHERF1. Interacts with GAPDH; induced by oxidatively-modified low-densitity lipoprotein (LDL(ox)). Interacts with S100A8 and S100A9 to form the iNOS-S100A8/9 transnitrosylase complex. Interacts with SPSB1, SPSB2 and SPSB4. Interacts with ELOC and CUL5 in the presence of SPSB1 or SPSB2 or SPSB4. Forms a complex with ASL, ASS1 and HSP90AA1; the complex regulates cell-autonomous L-arginine synthesis and citrulline recycling while channeling extracellular L-arginine to nitric oxide synthesis pathway. It depends on heme b as a cofactor. Requires FAD as cofactor. FMN serves as cofactor. (6R)-L-erythro-5,6,7,8-tetrahydrobiopterin is required as a cofactor. In terms of processing, polyubiquitinated; mediated by SPSB1, SPSB2 and SPSB4, leading to proteasomal degradation.

The protein resides in the cytoplasm. It localises to the cytosol. It catalyses the reaction 2 L-arginine + 3 NADPH + 4 O2 + H(+) = 2 L-citrulline + 2 nitric oxide + 3 NADP(+) + 4 H2O. Not stimulated by calcium/calmodulin. Its function is as follows. Produces nitric oxide (NO) which is a messenger molecule with diverse functions throughout the body. In macrophages, NO mediates tumoricidal and bactericidal actions. Also has nitrosylase activity and mediates cysteine S-nitrosylation of cytoplasmic target proteins such PTGS2/COX2. As component of the iNOS-S100A8/9 transnitrosylase complex involved in the selective inflammatory stimulus-dependent S-nitrosylation of GAPDH implicated in regulation of the GAIT complex activity and probably multiple targets including ANXA5, EZR, MSN and VIM. Involved in inflammation, enhances the synthesis of pro-inflammatory mediators such as IL6 and IL8. The sequence is that of Nitric oxide synthase, inducible (NOS2) from Oryctolagus cuniculus (Rabbit).